A 903-amino-acid polypeptide reads, in one-letter code: MAVPKMVFSDVESFLDSHPELFEDYLNRKGSSSMVEKWLKNHQAGKSEAEPKEEKSSVCKDSWASKCDGLQRRASQKELRKTFARSKAINVNRTYDEHVNSRAQEPLTSMRRRALLRKASSLPPTTAHILSALLESRVNIPQYPSTAVDFKYYLKEHNEREFFLELVKDISNDLDLTSLSYKILVFVCIMVDADRCSLFLVEGTGNKKTLVSKFFDVHAGTTVLPSMNSGEVQVPWGKGIIGYVAEHGETVNIPDAYQDRRFSDEIDKLTGYKTKSLLCMPIQNSDGEIIGVAQAINKSSSGELFTEDDEKVLQMYLPFCGIAISNAQLFAASRKEYDRSRALLEVVNDLFEEQTDLEKIVRKIMHRAQTLLKCERCSVQLLEDIESPVVKFTKSFELLSPKCSADAESSFKDSMEKSSYSDWLINNSIAELVASTGLPVNISDAYQDPRFDAEADQFSDFHIRSVLCVPIWNSNHQIIGVAQVLNRLDGKPFDDADQRLFEAFVIFCGLGINNTIMYDQVKKSWAKQSVALDVLSYHATCSKTEVDKFKAANIPLVCELGIDKLSFDDFSLDVDAMITAALRMFIELGMVQKFKIDYETLCRWLLTVRKNYRMVLYHNWRHAFNVCQCMFAMLTTAGFQETLTDVEILALIVGCVCHDLDHRGTNNAFQAKTGSALSLLYGTSATLEHHHFNHAVMILQSEGHNIFCNLSSTEYSDLMQLLKQSILATDLTLYFENRNSFFELVSIGEYNWNVKTHRDMCRSMMMTACDLGAVTKPWDISRKVAELVTSEFFEQGDRERSELKLTPSAIFDRNRKDELPGLQLEWIDGICAPLYETLVKLNPKLQPMVDMINANRVKWEELDKKRQHDHGASVPASPCSAAEGSETGGVPCCSNNTPPTHVS.

GAF domains are found at residues 175–324 and 356–512; these read DLTS…GIAI and DLEK…GLGI. Ser-378 lines the 3',5'-cyclic GMP pocket. Residues 542 to 866 enclose the PDEase domain; sequence SKTEVDKFKA…VKWEELDKKR (325 aa). Residue His-618 is the Proton donor of the active site. 4 residues coordinate a divalent metal cation: His-622, His-658, Asp-659, and Asp-770. The disordered stretch occupies residues 863–903; the sequence is DKKRQHDHGASVPASPCSAAEGSETGGVPCCSNNTPPTHVS. Residues 893 to 903 are compositionally biased toward polar residues; sequence CSNNTPPTHVS.

This sequence belongs to the cyclic nucleotide phosphodiesterase family. Requires a divalent metal cation as cofactor.

It localises to the cytoplasm. Its subcellular location is the cytosol. It catalyses the reaction 3',5'-cyclic GMP + H2O = GMP + H(+). The enzyme catalyses 3',5'-cyclic AMP + H2O = AMP + H(+). In terms of biological role, plays a role in signal transduction by regulating the intracellular concentration of cyclic nucleotides cAMP and cGMP. Catalyzes the hydrolysis of both cAMP and cGMP to 5'-AMP and 5'-GMP, respectively. This chain is Dual 3',5'-cyclic-AMP and -GMP phosphodiesterase 11A (pde11a), found in Takifugu rubripes (Japanese pufferfish).